A 346-amino-acid chain; its full sequence is N-acetyl-gamma-glutamyl-phosphate reductase (346 aa).

The active site involves Cys150.

It belongs to the NAGSA dehydrogenase family. Type 1 subfamily.

It is found in the cytoplasm. The enzyme catalyses N-acetyl-L-glutamate 5-semialdehyde + phosphate + NADP(+) = N-acetyl-L-glutamyl 5-phosphate + NADPH + H(+). It participates in amino-acid biosynthesis; L-arginine biosynthesis; N(2)-acetyl-L-ornithine from L-glutamate: step 3/4. Functionally, catalyzes the NADPH-dependent reduction of N-acetyl-5-glutamyl phosphate to yield N-acetyl-L-glutamate 5-semialdehyde. The protein is N-acetyl-gamma-glutamyl-phosphate reductase of Desulforamulus reducens (strain ATCC BAA-1160 / DSM 100696 / MI-1) (Desulfotomaculum reducens).